Consider the following 121-residue polypeptide: Large ribosomal subunit protein bL12 (121 aa).

The protein belongs to the bacterial ribosomal protein bL12 family. As to quaternary structure, homodimer. Part of the ribosomal stalk of the 50S ribosomal subunit. Forms a multimeric L10(L12)X complex, where L10 forms an elongated spine to which 2 to 4 L12 dimers bind in a sequential fashion. Binds GTP-bound translation factors.

Forms part of the ribosomal stalk which helps the ribosome interact with GTP-bound translation factors. Is thus essential for accurate translation. The protein is Large ribosomal subunit protein bL12 of Lachnospira eligens (strain ATCC 27750 / DSM 3376 / VPI C15-48 / C15-B4) (Eubacterium eligens).